The following is a 153-amino-acid chain: NADH dehydrogenase [ubiquinone] 1 beta subcomplex subunit 11, mitochondrial (153 aa).

Residues 1 to 29 (MAAGLFGLSARRLLAAAATRGLPAARVRW) constitute a mitochondrion transit peptide. The segment at 49–72 (PEPTTQWQEDLDPEDENLYEKNPD) is disordered. The chain crosses the membrane as a helical span at residues 89 to 109 (LVFFFGVSIILVLGSTFVAYL).

The protein belongs to the complex I NDUFB11 subunit family. Complex I is composed of 45 different subunits. Interacts with BCAP31.

It is found in the mitochondrion inner membrane. In terms of biological role, accessory subunit of the mitochondrial membrane respiratory chain NADH dehydrogenase (Complex I), that is believed not to be involved in catalysis. Complex I functions in the transfer of electrons from NADH to the respiratory chain. The immediate electron acceptor for the enzyme is believed to be ubiquinone. The sequence is that of NADH dehydrogenase [ubiquinone] 1 beta subcomplex subunit 11, mitochondrial (NDUFB11) from Pongo pygmaeus (Bornean orangutan).